The sequence spans 82 residues: ATP synthase subunit c (82 aa).

Helical transmembrane passes span Phe-7 to Ile-27 and Phe-53 to Phe-73.

This sequence belongs to the ATPase C chain family. As to quaternary structure, F-type ATPases have 2 components, F(1) - the catalytic core - and F(0) - the membrane proton channel. F(1) has five subunits: alpha(3), beta(3), gamma(1), delta(1), epsilon(1). F(0) has three main subunits: a(1), b(2) and c(10-14). The alpha and beta chains form an alternating ring which encloses part of the gamma chain. F(1) is attached to F(0) by a central stalk formed by the gamma and epsilon chains, while a peripheral stalk is formed by the delta and b chains.

The protein localises to the cell inner membrane. Its function is as follows. F(1)F(0) ATP synthase produces ATP from ADP in the presence of a proton or sodium gradient. F-type ATPases consist of two structural domains, F(1) containing the extramembraneous catalytic core and F(0) containing the membrane proton channel, linked together by a central stalk and a peripheral stalk. During catalysis, ATP synthesis in the catalytic domain of F(1) is coupled via a rotary mechanism of the central stalk subunits to proton translocation. In terms of biological role, key component of the F(0) channel; it plays a direct role in translocation across the membrane. A homomeric c-ring of between 10-14 subunits forms the central stalk rotor element with the F(1) delta and epsilon subunits. The protein is ATP synthase subunit c of Polaromonas sp. (strain JS666 / ATCC BAA-500).